Reading from the N-terminus, the 145-residue chain is 3-dehydroquinate dehydratase 1 (145 aa).

Tyr-24 acts as the Proton acceptor in catalysis. Residues Asn-75, His-81, and Asp-88 each coordinate substrate. His-101 functions as the Proton donor in the catalytic mechanism. Residues 102–103 (IS) and Arg-112 contribute to the substrate site.

This sequence belongs to the type-II 3-dehydroquinase family. In terms of assembly, homododecamer.

It catalyses the reaction 3-dehydroquinate = 3-dehydroshikimate + H2O. It functions in the pathway metabolic intermediate biosynthesis; chorismate biosynthesis; chorismate from D-erythrose 4-phosphate and phosphoenolpyruvate: step 3/7. Catalyzes a trans-dehydration via an enolate intermediate. In Agrobacterium fabrum (strain C58 / ATCC 33970) (Agrobacterium tumefaciens (strain C58)), this protein is 3-dehydroquinate dehydratase 1 (aroQ1).